The primary structure comprises 241 residues: Probable transcriptional regulatory protein Neut_0281 (241 aa).

It belongs to the TACO1 family.

Its subcellular location is the cytoplasm. In Nitrosomonas eutropha (strain DSM 101675 / C91 / Nm57), this protein is Probable transcriptional regulatory protein Neut_0281.